Consider the following 776-residue polypeptide: Heat shock protein 110 (776 aa).

Residues 741–776 form a disordered region; sequence ILNKKKPAAPAPPKKEEPQPAAGDQPQSQPGEMDVD.

Belongs to the heat shock protein 70 family.

The protein is Heat shock protein 110 of Caenorhabditis elegans.